The following is a 275-amino-acid chain: Lincomycin biosynthesis protein LmbN (275 aa).

The region spanning 1–78 (MSTLDEVLAL…AIAATVARIT (78 aa)) is the Carrier domain. At S37 the chain carries O-(pantetheine 4'-phosphoryl)serine. Residues 113–275 (LFDTWHAGGT…HHALCVAHAP (163 aa)) form the SIS domain.

The protein operates within antibiotic biosynthesis; lincomycin biosynthesis. In Streptomyces lincolnensis, this protein is Lincomycin biosynthesis protein LmbN (lmbN).